A 474-amino-acid chain; its full sequence is MWTVQNRESLGLLSFPVMITMVCCAHSTNEPSNMSYVKETVDRLLKGYDIRLRPDFGGPPVDVGMRIDVASIDMVSEVNMDYTLTMYFQQSWKDKRLSYSGIPLNLTLDNRVADQLWVPDTYFLNDKKSFVHGVTVKNRMIRLHPDGTVLYGLRITTTAACMMDLRRYPLDEQNCTLEIESYGYTTDDIEFYWNGGEGAVTGVNKIELPQFSIVDYKMVSKKVEFTTGAYPRLSLSFRLKRNIGYFILQTYMPSTLITILSWVSFWINYDASAARVALGITTVLTMTTISTHLRETLPKIPYVKAIDIYLMGCFVFVFLALLEYAFVNYIFFGKGPQKKGASKQDQSANEKNKLEMNKVQVDAHGNILLSTLEIRNETSGSEVLTSVSDPKATMYSYDSASIQYRKPLSSREAYGRALDRHGVPSKGRIRRRASQLKVKIPDLTDVNSIDKWSRMFFPITFSLFNVVYWLYYVH.

Residues 1-25 form the signal peptide; it reads MWTVQNRESLGLLSFPVMITMVCCA. At 26–245 the chain is on the extracellular side; sequence HSTNEPSNMS…SFRLKRNIGY (220 aa). Asn-105 carries N-linked (GlcNAc...) asparagine glycosylation. Tyr-122 contacts histamine. Residues Cys-161 and Cys-175 are joined by a disulfide bond. Asn-174 carries an N-linked (GlcNAc...) asparagine glycan. Histamine contacts are provided by residues 181–182 and Thr-227; that span reads SY. Residues Tyr-182 and Thr-227 each coordinate 4-aminobutanoate. 3 consecutive transmembrane segments (helical) span residues 246 to 267, 271 to 293, and 305 to 327; these read FILQ…SFWI, ASAA…STHL, and AIDI…YAFV. Topologically, residues 328 to 451 are cytoplasmic; it reads NYIFFGKGPQ…DLTDVNSIDK (124 aa). Residues 452–473 form a helical membrane-spanning segment; that stretch reads WSRMFFPITFSLFNVVYWLYYV.

Belongs to the ligand-gated ion channel (TC 1.A.9) family. Gamma-aminobutyric acid receptor (TC 1.A.9.5) subfamily. GABRB1 sub-subfamily. In terms of assembly, heteropentamer, formed by a combination of alpha (GABRA1-6), beta (GABRB1-3), gamma (GABRG1-3), delta (GABRD), epsilon (GABRE), rho (GABRR1-3), pi (GABRP) and theta (GABRQ) chains, each subunit exhibiting distinct physiological and pharmacological properties. Binds UBQLN1.

It is found in the postsynaptic cell membrane. It localises to the cell membrane. The catalysed reaction is chloride(in) = chloride(out). Its activity is regulated as follows. Potentiated by etomidate, propofol, pregnanolone and flurazepam. Potentiated by histamine. In terms of biological role, beta subunit of the heteropentameric ligand-gated chloride channel gated by gamma-aminobutyric acid (GABA), a major inhibitory neurotransmitter in the brain. GABA-gated chloride channels, also named GABA(A) receptors (GABAAR), consist of five subunits arranged around a central pore and contain one or two GABA active binding sites located at the alpha and beta subunit interfaces, depending on subunit composition. When activated by GABA, GABAARs selectively allow the flow of chloride anions across the cell membrane down their electrochemical gradient. Chloride influx into the postsynaptic neuron following GABAAR opening decreases the neuron ability to generate a new action potential, thereby reducing nerve transmission. Beta-containing GABAARs can simultaneously bind GABA and histamine where histamine binds at the interface of two neighboring beta subunits, which may be involved in the regulation of sleep and wakefulness. The polypeptide is Gamma-aminobutyric acid receptor subunit beta-1 (Homo sapiens (Human)).